Reading from the N-terminus, the 417-residue chain is Brevican core protein (417 aa).

The N-terminal stretch at 1–22 (MAPLFLPLLIALALAPGPTASA) is a signal peptide. The 133-residue stretch at 23 to 155 (DVLEGDSSED…SSDAVEVKVK (133 aa)) folds into the Ig-like V-type domain. 3 disulfides stabilise this stretch: cysteine 57–cysteine 137, cysteine 179–cysteine 250, and cysteine 203–cysteine 224. A glycan (N-linked (GlcNAc...) asparagine) is linked at asparagine 130. Link domains follow at residues 157–252 (VVFL…YCYA) and 257–354 (GELF…YCFR). N-linked (GlcNAc...) asparagine glycosylation occurs at asparagine 267. Cystine bridges form between cysteine 277-cysteine 352 and cysteine 301-cysteine 322. A glycan (N-linked (GlcNAc...) asparagine) is linked at asparagine 337.

It belongs to the aggrecan/versican proteoglycan family. As to expression, central nervous system.

It localises to the secreted. The protein localises to the extracellular space. It is found in the extracellular matrix. May play a role in the terminally differentiating and the adult nervous system during postnatal development. Could stabilize interactions between hyaluronan (HA) and brain proteoglycans. This chain is Brevican core protein (BCAN), found in Felis catus (Cat).